Reading from the N-terminus, the 384-residue chain is Outer membrane protein assembly factor BamB (384 aa).

The first 21 residues, 1–21 (MKLTLKRKFIAVLALTSLLGA), serve as a signal peptide directing secretion. Cys-22 carries N-palmitoyl cysteine lipidation. Cys-22 carries the S-diacylglycerol cysteine lipid modification.

The protein belongs to the BamB family. Part of the Bam complex.

The protein localises to the cell outer membrane. In terms of biological role, part of the outer membrane protein assembly complex, which is involved in assembly and insertion of beta-barrel proteins into the outer membrane. The sequence is that of Outer membrane protein assembly factor BamB from Taylorella asinigenitalis (strain MCE3).